We begin with the raw amino-acid sequence, 321 residues long: Leucine-rich repeat-containing protein 46 (321 aa).

LRR repeat units lie at residues 45 to 66 (ELQT…EGLQ), 67 to 88 (NLHS…ACIP), 89 to 110 (SLRF…LDLP), and 111 to 132 (CLQF…EFPQ). Positions 142–184 (NSCTNQDGYRELVTEALPLLLDLDGQPVVERWISDEEDEASSD) constitute an LRRCT domain. Residues serine 175 and serine 182 each carry the phosphoserine modification. A coiled-coil region spans residues 201–221 (LKELEQELSRHREHRQQTALT). Residues 235–321 (DLPLLPGVPM…TKTTAKRSKK (87 aa)) form a disordered region.

It is found in the cell projection. Its subcellular location is the cilium. The protein localises to the flagellum. Required for normal spermatogenesis and male fertility. Plays an important role in sperm flagellum biogenesis. The polypeptide is Leucine-rich repeat-containing protein 46 (LRRC46) (Homo sapiens (Human)).